The following is a 96-amino-acid chain: Large ribosomal subunit protein uL23 (96 aa).

It belongs to the universal ribosomal protein uL23 family. As to quaternary structure, part of the 50S ribosomal subunit. Contacts protein L29, and trigger factor when it is bound to the ribosome.

Its function is as follows. One of the early assembly proteins it binds 23S rRNA. One of the proteins that surrounds the polypeptide exit tunnel on the outside of the ribosome. Forms the main docking site for trigger factor binding to the ribosome. The polypeptide is Large ribosomal subunit protein uL23 (Nitratidesulfovibrio vulgaris (strain ATCC 29579 / DSM 644 / CCUG 34227 / NCIMB 8303 / VKM B-1760 / Hildenborough) (Desulfovibrio vulgaris)).